Reading from the N-terminus, the 766-residue chain is Darlin (766 aa).

4 ARM repeats span residues Q82–Y119, D167–D208, E423–L464, and P465–D537. The interval E561 to K585 is disordered. Residues H610–K649 form an ARM 5 repeat.

The protein belongs to the RAP1GDS1 family. In terms of assembly, binds to small GTPases racE, racC but not rab21. Binds preferentially to GDP-bound racE.

In terms of biological role, part of a signaling pathway that initiates the aggregation and leads to the formation of aggregation centers or streams. Not essential for cytokinesis, pinocytosis or phagocytosis. Not essential for development, except in starvation-induced aggregation. In Dictyostelium discoideum (Social amoeba), this protein is Darlin (darA).